The following is a 255-amino-acid chain: MAADIRVFTCLSDNFGYLIHDPATGATASVDAPEAGPIIRQLEAAGWTLTDILITHHHHDHVGAVAELKQKYGCRVVAPHDKTTAIADVDLRVGHGDVIKVGELLARVLETPGHTLDHVSYVFDADKAVFAADTLFSVGCGRVFEGTYPMMWDSLLKLRALPDDFRLYCGHEYTASNVKFALTVDGDNEALKARAAEVTRLRAANESTIPSLLGDEKQTNVFLRADDPAVAIKLRMKGATAEQVFGELRERKNKS.

The Zn(2+) site is built by His-56, His-58, Asp-60, His-61, His-114, Asp-133, and His-171.

It belongs to the metallo-beta-lactamase superfamily. Glyoxalase II family. In terms of assembly, monomer. Zn(2+) is required as a cofactor.

It carries out the reaction an S-(2-hydroxyacyl)glutathione + H2O = a 2-hydroxy carboxylate + glutathione + H(+). It functions in the pathway secondary metabolite metabolism; methylglyoxal degradation; (R)-lactate from methylglyoxal: step 2/2. Functionally, thiolesterase that catalyzes the hydrolysis of S-D-lactoyl-glutathione to form glutathione and D-lactic acid. In Bradyrhizobium sp. (strain BTAi1 / ATCC BAA-1182), this protein is Hydroxyacylglutathione hydrolase.